The following is a 122-amino-acid chain: Small ribosomal subunit protein uS13 (122 aa).

Residues 96–122 are disordered; sequence LPCRGQRTHTNARTRKGPRKPIAGKKK.

Belongs to the universal ribosomal protein uS13 family. Part of the 30S ribosomal subunit. Forms a loose heterodimer with protein S19. Forms two bridges to the 50S subunit in the 70S ribosome.

Its function is as follows. Located at the top of the head of the 30S subunit, it contacts several helices of the 16S rRNA. In the 70S ribosome it contacts the 23S rRNA (bridge B1a) and protein L5 of the 50S subunit (bridge B1b), connecting the 2 subunits; these bridges are implicated in subunit movement. Contacts the tRNAs in the A and P-sites. The polypeptide is Small ribosomal subunit protein uS13 (Magnetococcus marinus (strain ATCC BAA-1437 / JCM 17883 / MC-1)).